The sequence spans 529 residues: Lysophosphatidylcholine acyltransferase 2 (529 aa).

Residues 1-50 (MPPPHRVFALPRQQSLLLPAVINPFVHDLSLSTADITKCFLLGIILVPLR) are Cytoplasmic-facing. A helical; Signal-anchor for type II membrane protein transmembrane segment spans residues 51–71 (AIFLLLVLLVMWPVSVIITFG). Residues 72–529 (QSLKGVVEPM…EDSASDKKDD (458 aa)) lie on the Lumenal side of the membrane. Residues 128-133 (HSSFFD) carry the HXXXXD motif motif. An EGTC motif motif is present at residues 202 to 205 (EGTC). A glycan (N-linked (GlcNAc...) asparagine) is linked at N207. EF-hand domains follow at residues 373–408 (PISP…LCRP), 410–445 (NNEE…ALGV), and 449–480 (DVHS…HPEY). D386, N388, D390, T392, E397, D423, D425, D427, C429, E434, D458, D460, S462, H464, and E469 together coordinate Ca(2+).

This sequence belongs to the 1-acyl-sn-glycerol-3-phosphate acyltransferase family.

Its subcellular location is the endoplasmic reticulum membrane. The protein resides in the golgi apparatus membrane. It localises to the cell membrane. The protein localises to the lipid droplet. It carries out the reaction a 1-acyl-sn-glycero-3-phosphocholine + an acyl-CoA = a 1,2-diacyl-sn-glycero-3-phosphocholine + CoA. The enzyme catalyses a 1-O-alkyl-sn-glycero-3-phosphocholine + acetyl-CoA = a 1-O-alkyl-2-acetyl-sn-glycero-3-phosphocholine + CoA. The catalysed reaction is a 1-acyl-sn-glycero-3-phosphate + an acyl-CoA = a 1,2-diacyl-sn-glycero-3-phosphate + CoA. It catalyses the reaction a 1-O-(1Z-alkenyl)-sn-glycero-3-phosphocholine + an acyl-CoA = a 1-O-(1Z-alkenyl)-2-acyl-sn-glycero-3-phosphocholine + CoA. It carries out the reaction 1-hexadecanoyl-sn-glycero-3-phosphate + (9Z)-octadecenoyl-CoA = 1-hexadecanoyl-2-(9Z-octadecenoyl)-sn-glycero-3-phosphate + CoA. The enzyme catalyses 1-(9Z-octadecenoyl)-sn-glycero-3-phosphate + (9Z)-octadecenoyl-CoA = 1,2-di-(9Z-octadecenoyl)-sn-glycero-3-phosphate + CoA. The catalysed reaction is 1-(9Z-octadecenoyl)-sn-glycero-3-phosphate + hexadecanoyl-CoA = 1-(9Z)-octadecenoyl-2-hexadecanoyl-sn-glycero-3-phosphate + CoA. It catalyses the reaction 1-heptadecanoyl-sn-glycero-3-phosphate + (9Z)-octadecenoyl-CoA = 1-heptadecanoyl-2-(9Z)-octadecenoyl-sn-glycero-3-phosphate + CoA. It carries out the reaction 1-octadecanoyl-sn-glycero-3-phosphate + (9Z)-octadecenoyl-CoA = 1-octadecanoyl-2-(9Z-octadecenoyl)-sn-glycero-3-phosphate + CoA. The enzyme catalyses heptadecanoyl-CoA + 1-(9Z-octadecenoyl)-sn-glycero-3-phosphate = 1-(9Z)-octadecenoyl-2-heptadecanoyl-sn-glycero-3-phosphate + CoA. The catalysed reaction is 1-(9Z-octadecenoyl)-sn-glycero-3-phosphate + (9Z,12Z)-octadecadienoyl-CoA = 1-(9Z)-octadecenoyl-2-(9Z,12Z)-octadecadienoyl-sn-glycero-3-phosphate + CoA. It catalyses the reaction 1-(9Z-octadecenoyl)-sn-glycero-3-phosphate + tetradecanoyl-CoA = 1-(9Z)-octadecenoyl-2-tetradecanoyl-sn-glycero-3-phosphate + CoA. It carries out the reaction pentadecanoyl-CoA + 1-(9Z-octadecenoyl)-sn-glycero-3-phosphate = 1-(9Z)-octadecenoyl-2-pentadecanoyl-sn-glycero-3-phosphate + CoA. The enzyme catalyses nonadecanoyl-CoA + 1-(9Z-octadecenoyl)-sn-glycero-3-phosphate = 1-(9Z)-octadecenoyl-2-nonadecanoyl-sn-glycero-3-phosphate + CoA. The catalysed reaction is 1-hexadecanoyl-sn-glycero-3-phosphocholine + (9Z)-octadecenoyl-CoA = 1-hexadecanoyl-2-(9Z-octadecenoyl)-sn-glycero-3-phosphocholine + CoA. It catalyses the reaction 1-O-hexadecyl-sn-glycero-3-phosphocholine + acetyl-CoA = 1-O-hexadecyl-2-acetyl-sn-glycero-3-phosphocholine + CoA. It carries out the reaction 1-O-octadecyl-sn-glycero-3-phosphocholine + acetyl-CoA = 1-O-octadecyl-2-acetyl-sn-glycero-3-phosphocholine + CoA. The enzyme catalyses 1-hexadecanoyl-sn-glycero-3-phosphocholine + acetyl-CoA = 1-hexadecanoyl-2-acetyl-sn-glycero-3-phosphocholine + CoA. The catalysed reaction is 1-octadecanoyl-sn-glycero-3-phosphocholine + acetyl-CoA = 1-octadecanoyl-2-acetyl-sn-glycero-3-phosphocholine + CoA. It catalyses the reaction a 1-O-(1Z-alkenyl)-sn-glycero-3-phosphocholine + acetyl-CoA = 1-O-(1Z)-alkenyl-2-acetyl-sn-glycero-3-phosphocholine + CoA. It carries out the reaction 1-O-octadecyl-sn-glycero-3-phosphocholine + (5Z,8Z,11Z,14Z)-eicosatetraenoyl-CoA = 1-O-octadecyl-2-(5Z,8Z,11Z,14Z)-eicosatetraenoyl-sn-glycero-3-phosphocholine + CoA. Its pathway is lipid metabolism; phospholipid metabolism. Functionally, exhibits both acyltransferase and acetyltransferase activities. Activity is calcium-dependent. Catalyzes the conversion of lysophosphatidylcholine (1-acyl-sn-glycero-3-phosphocholine or LPC) into phosphatidylcholine (1,2-diacyl-sn-glycero-3-phosphocholine or PC). Catalyzes the conversion 1-acyl-sn-glycerol-3-phosphate (lysophosphatidic acid or LPA) into 1,2-diacyl-sn-glycerol-3-phosphate (phosphatidic acid or PA) by incorporating an acyl moiety at the sn-2 position of the glycerol backbone. Involved in platelet-activating factor (PAF) biosynthesis by catalyzing the conversion of the PAF precursor, 1-O-alkyl-sn-glycero-3-phosphocholine (lyso-PAF) into 1-O-alkyl-2-acetyl-sn-glycero-3-phosphocholine (PAF). The chain is Lysophosphatidylcholine acyltransferase 2 (lpcat2) from Danio rerio (Zebrafish).